The sequence spans 448 residues: Pentatricopeptide repeat-containing protein At1g80550, mitochondrial (448 aa).

Residues 1-21 constitute a mitochondrion transit peptide; the sequence is MLLLRRLNRVRIASPYSVRLL. 10 PPR repeats span residues 80-110, 116-146, 150-186, 188-222, 223-257, 258-292, 293-327, 331-359, 360-394, and 395-429; these read TTET…MIGN, NHVT…LDDF, DETS…GFSV, NTKI…GVTK, DLFS…RMKL, DVVA…GCEP, NVAT…GCQP, TYMC…GVRP, KMDT…GDTP, and DSAA…GLSP.

The protein belongs to the PPR family. P subfamily.

It localises to the mitochondrion. In Arabidopsis thaliana (Mouse-ear cress), this protein is Pentatricopeptide repeat-containing protein At1g80550, mitochondrial.